A 228-amino-acid polypeptide reads, in one-letter code: MLTRKQMELLDFIKTRMDRDGVPPSFDEMKDALDLRSKSGIHRLITALEERGFIRRLAHRARAIEIVKLPEAMERAGFSARAAKAAAAPLPKGAVTVETAGALDLPLMGRIAAGLPIEAINGGPQSVTVPGMMLSGRGQHYALEVKGDSMIAAGINDGDIVVIREQQTADNGDIVVALVADHEATLKRYRRRGGMIALEPANDSYETQVYPEQMVKVQGRLVGLIRSY.

The H-T-H motif DNA-binding region spans 26–46; the sequence is FDEMKDALDLRSKSGIHRLIT. Residues Ser149 and Lys187 each act as for autocatalytic cleavage activity in the active site.

This sequence belongs to the peptidase S24 family. As to quaternary structure, homodimer.

The enzyme catalyses Hydrolysis of Ala-|-Gly bond in repressor LexA.. In terms of biological role, represses a number of genes involved in the response to DNA damage (SOS response), including recA and lexA. Has been shown to bind to the direct repeat sequence 5'-GTT-N(7)-GTTC-3'. In the presence of single-stranded DNA, RecA interacts with LexA causing an autocatalytic cleavage which disrupts the DNA-binding part of LexA, leading to derepression of the SOS regulon and eventually DNA repair. This chain is LexA repressor, found in Cereibacter sphaeroides (strain ATCC 17023 / DSM 158 / JCM 6121 / CCUG 31486 / LMG 2827 / NBRC 12203 / NCIMB 8253 / ATH 2.4.1.) (Rhodobacter sphaeroides).